Consider the following 104-residue polypeptide: Large ribosomal subunit protein uL24 (104 aa).

It belongs to the universal ribosomal protein uL24 family. As to quaternary structure, part of the 50S ribosomal subunit.

One of two assembly initiator proteins, it binds directly to the 5'-end of the 23S rRNA, where it nucleates assembly of the 50S subunit. In terms of biological role, one of the proteins that surrounds the polypeptide exit tunnel on the outside of the subunit. The protein is Large ribosomal subunit protein uL24 of Aliivibrio fischeri (strain ATCC 700601 / ES114) (Vibrio fischeri).